A 340-amino-acid polypeptide reads, in one-letter code: Anthranilate phosphoribosyltransferase (340 aa).

5-phospho-alpha-D-ribose 1-diphosphate-binding positions include Gly-82, 85-86 (GD), Thr-90, 92-95 (NISS), 110-118 (KHGGRSVSS), and Ala-122. Residue Gly-82 participates in anthranilate binding. Ser-94 contributes to the Mg(2+) binding site. An anthranilate-binding site is contributed by Arg-168. Mg(2+)-binding residues include Asp-227 and Glu-228.

This sequence belongs to the anthranilate phosphoribosyltransferase family. In terms of assembly, homodimer. It depends on Mg(2+) as a cofactor.

It catalyses the reaction N-(5-phospho-beta-D-ribosyl)anthranilate + diphosphate = 5-phospho-alpha-D-ribose 1-diphosphate + anthranilate. Its pathway is amino-acid biosynthesis; L-tryptophan biosynthesis; L-tryptophan from chorismate: step 2/5. Catalyzes the transfer of the phosphoribosyl group of 5-phosphorylribose-1-pyrophosphate (PRPP) to anthranilate to yield N-(5'-phosphoribosyl)-anthranilate (PRA). The sequence is that of Anthranilate phosphoribosyltransferase from Dechloromonas aromatica (strain RCB).